Here is a 705-residue protein sequence, read N- to C-terminus: MSTMPHFSRTLVTTALPYANGPVHLGHLAGVYLPADLYVRYKRLKGEDIIHIGGSDEHGVPITISAEKEGISPRDVVDRYHAMNLDAFTRCGISFDYYGRTSSAVHHATAQEFFSDIEQKGIFQQKTEKLFFDLQAGRFLSDRYVTGTCPVCNNPEANGDQCEQCGTHLSPLELLNPKSKLSDATPELRETLHWYFPLGRFQAALEEYVNSHEGEWRPNVVNYTRTWFKQGLNDRAITRDLDWGVAVPLQSAEAVGKVLYVWFDAVLGYISFTKEWAALQGNAELWKTYWQDPETRLIHFIGKDNVVFHTLMFPSILMAWNEGKTTDCYNLADNVPASEFMNFEGRKFSKSRNYAVYLGEFLDKFPADTLRYSIAMNYPESKDTDFSWQDFQNRTNGELADTLGNFIKRSIDFTNTRFEGVVPASVTKEEWDNLGIDWQATLEQLDSAYEGFHFRDAATLGMEIARAANRYLTSSEPWKVIKVDREAAATTMALSLNLCHALSIALYPVIPETCNRIRAMLGFSEPLEATIQRGTSLLSSLLTPTLQQGHKLREHSEILFTKIEDSAIAPELEKIAKLIAEAEKREAALAESRIEFKPAISFDEFQKVDLRVATVVAAEPVAKANKLLKLRVQVGSLTRQVLAGIAKHYTPEEMVGKQVLLVANLEERTIRGELSQGMILAVENSDGKLFIVQPSGEGINGQSVQ.

The short motif at 17-27 (PYANGPVHLGH) is the 'HIGH' region element. Positions 149, 152, 162, and 165 each coordinate Zn(2+). Positions 347 to 351 (KFSKS) match the 'KMSKS' region motif. Lys350 contacts ATP. In terms of domain architecture, tRNA-binding spans 604–705 (EFQKVDLRVA…GEGINGQSVQ (102 aa)).

It belongs to the class-I aminoacyl-tRNA synthetase family. MetG type 1 subfamily. In terms of assembly, homodimer. Requires Zn(2+) as cofactor.

The protein resides in the cytoplasm. The enzyme catalyses tRNA(Met) + L-methionine + ATP = L-methionyl-tRNA(Met) + AMP + diphosphate. Is required not only for elongation of protein synthesis but also for the initiation of all mRNA translation through initiator tRNA(fMet) aminoacylation. This Chlorobium chlorochromatii (strain CaD3) protein is Methionine--tRNA ligase.